We begin with the raw amino-acid sequence, 348 residues long: S-adenosyl-L-methionine-dependent methyl transferase PigF (348 aa).

E199 contacts S-adenosyl-L-methionine. Residue H247 is the Proton acceptor of the active site.

This sequence belongs to the class I-like SAM-binding methyltransferase superfamily. Cation-independent O-methyltransferase family.

It participates in antibiotic biosynthesis; prodigiosin biosynthesis. Its function is as follows. Involved in the biosynthesis of 4-methoxy-2,2'-bipyrrole-5-carbaldehyde (MBC), one of the terminal products involved in the biosynthesis of the red antibiotic prodigiosin (Pig). Catalyzes the transfer of a methyl group from S-adenosyl-L-methionine (SAM) to the hydroxyl group of 4-hydroxy-2,2'-bipyrrole-5-carbaldehyde (HBC) to yield 4-methoxy-2,2'-bipyrrole-5-carbaldehyde (MBC). The protein is S-adenosyl-L-methionine-dependent methyl transferase PigF of Serratia sp. (strain ATCC 39006) (Prodigiosinella confusarubida).